The sequence spans 97 residues: Small ribosomal subunit protein bS20c (97 aa).

The segment covering 1–15 (MSKNVSAIKKNQVSL) has biased composition (polar residues). Residues 1–20 (MSKNVSAIKKNQVSLRNKRK) form a disordered region.

It belongs to the bacterial ribosomal protein bS20 family.

The protein localises to the plastid. Its subcellular location is the chloroplast. Binds directly to 16S ribosomal RNA. This chain is Small ribosomal subunit protein bS20c, found in Gracilaria tenuistipitata var. liui (Red alga).